Here is a 23-residue protein sequence, read N- to C-terminus: Apolipophorin-1 (23 aa).

Residues 1–15 (SVKSEVDNFDKHLKA) show a composition bias toward basic and acidic residues. The interval 1-23 (SVKSEVDNFDKHLKAESAPFNNE) is disordered.

Expressed in hemolymph.

The protein resides in the secreted. Functionally, constitutes the major component of lipophorin, which mediates transport for various types of lipids in hemolymph. Acts by forming lipoprotein particles that bind lipoproteins and lipids. In Galleria mellonella (Greater wax moth), this protein is Apolipophorin-1.